Reading from the N-terminus, the 129-residue chain is Small ribosomal subunit protein uS9 (129 aa).

A disordered region spans residues 108-129 (RMVERKKYGKKKARKSFQFSKR). The segment covering 114 to 129 (KYGKKKARKSFQFSKR) has biased composition (basic residues).

The protein belongs to the universal ribosomal protein uS9 family.

This chain is Small ribosomal subunit protein uS9, found in Chlorobaculum tepidum (strain ATCC 49652 / DSM 12025 / NBRC 103806 / TLS) (Chlorobium tepidum).